The primary structure comprises 142 residues: Small ribosomal subunit protein uS12 (142 aa).

It belongs to the universal ribosomal protein uS12 family. In terms of assembly, part of the 30S ribosomal subunit.

Its function is as follows. With S4 and S5 plays an important role in translational accuracy. Located at the interface of the 30S and 50S subunits. This Archaeoglobus fulgidus (strain ATCC 49558 / DSM 4304 / JCM 9628 / NBRC 100126 / VC-16) protein is Small ribosomal subunit protein uS12.